A 226-amino-acid chain; its full sequence is HTH-type transcriptional regulator Rv0324 (226 aa).

Residues 7 to 101 enclose the HTH arsR-type domain; sequence RKAALLDQVA…LVQVVADEHL (95 aa). Residues 41–64 constitute a DNA-binding region (H-T-H motif); it reads VEAIATATGMNLTTASANLQALKS. The Rhodanese domain maps to 129–218; sequence EAGEVTLVDV…WRLAGLPVDE (90 aa). C177 functions as the Cysteine persulfide intermediate in the catalytic mechanism.

Functionally, part of a regulatory network that coordinates tolerance to the antitubercular drug bedaquiline. This Mycobacterium tuberculosis (strain ATCC 25618 / H37Rv) protein is HTH-type transcriptional regulator Rv0324.